Reading from the N-terminus, the 257-residue chain is Electron transfer flavoprotein subunit beta (257 aa).

This sequence belongs to the ETF beta-subunit/FixA family. Heterodimer of an alpha and a beta subunit. FAD serves as cofactor. It depends on AMP as a cofactor.

In terms of biological role, the electron transfer flavoprotein serves as a specific electron acceptor for other dehydrogenases. It transfers the electrons to the main respiratory chain via ETF-ubiquinone oxidoreductase (ETF dehydrogenase). This chain is Electron transfer flavoprotein subunit beta (etfB), found in Bacillus subtilis (strain 168).